The chain runs to 493 residues: Serine/threonine-protein kinase PBL34 (493 aa).

2 disordered regions span residues 1–42 (MGLD…EEEE) and 84–117 (SKSA…TPVI). The N-myristoyl glycine moiety is linked to residue G2. A compositionally biased stretch (basic and acidic residues) spans 12 to 37 (WKSEKPKETENKNHKKKNGDDNKSRN). The segment covering 100-114 (SSTTTTSNAESSSST) has biased composition (low complexity). Residue T131 is modified to Phosphothreonine. Residues 142 to 428 (FRPESLLGEG…VEALKPLPHL (287 aa)) enclose the Protein kinase domain. ATP-binding positions include 148–156 (LGEGGFGCV) and K180. Y225 bears the Phosphotyrosine mark. Residue D275 is the Proton acceptor of the active site. Position 279 is a phosphoserine (S279). Residue T306 is modified to Phosphothreonine. Residue S309 is modified to Phosphoserine. T310 and T315 each carry phosphothreonine. Y323 carries the post-translational modification Phosphotyrosine. Positions 447 to 493 (KNGSGRSQGFGSRNGQHQPVFRTLSSPHGSSPYRHQIPSPKPKGATT) are disordered. Residues 450-475 (SGRSQGFGSRNGQHQPVFRTLSSPHG) show a composition bias toward polar residues.

Belongs to the protein kinase superfamily. Ser/Thr protein kinase family. As to quaternary structure, interacts with the Xanthomonas campestris effector XopAC/AvrAC. Interacts with SD129. Phosphorylated by SD129 at Thr-306 and Thr-310 in response to the pathogen-associated molecular pattern (PAMP) 3-OH-C10:0, a medium-chain 3-hydroxy fatty acid.

It localises to the cell membrane. It carries out the reaction L-seryl-[protein] + ATP = O-phospho-L-seryl-[protein] + ADP + H(+). It catalyses the reaction L-threonyl-[protein] + ATP = O-phospho-L-threonyl-[protein] + ADP + H(+). In terms of biological role, involved in chitin-triggered immune signaling and is required for reactive oxygen species (ROS) production. Acts downstream of SD129 in defense signaling triggered by the pathogen-associated molecular pattern (PAMP) 3-OH-C10:0, a medium-chain 3-hydroxy fatty acid. In Arabidopsis thaliana (Mouse-ear cress), this protein is Serine/threonine-protein kinase PBL34.